The chain runs to 261 residues: Thiazole synthase (261 aa).

The Schiff-base intermediate with DXP role is filled by K102. Residues G163, 189 to 190, and 211 to 212 each bind 1-deoxy-D-xylulose 5-phosphate; these read AG and NT.

Belongs to the ThiG family. Homotetramer. Forms heterodimers with either ThiH or ThiS.

It localises to the cytoplasm. It carries out the reaction [ThiS sulfur-carrier protein]-C-terminal-Gly-aminoethanethioate + 2-iminoacetate + 1-deoxy-D-xylulose 5-phosphate = [ThiS sulfur-carrier protein]-C-terminal Gly-Gly + 2-[(2R,5Z)-2-carboxy-4-methylthiazol-5(2H)-ylidene]ethyl phosphate + 2 H2O + H(+). The protein operates within cofactor biosynthesis; thiamine diphosphate biosynthesis. Catalyzes the rearrangement of 1-deoxy-D-xylulose 5-phosphate (DXP) to produce the thiazole phosphate moiety of thiamine. Sulfur is provided by the thiocarboxylate moiety of the carrier protein ThiS. In vitro, sulfur can be provided by H(2)S. The polypeptide is Thiazole synthase (Acinetobacter baylyi (strain ATCC 33305 / BD413 / ADP1)).